Here is a 239-residue protein sequence, read N- to C-terminus: Uridylate kinase (239 aa).

12–15 provides a ligand contact to ATP; that stretch reads KLSG. Residues 20-25 form an involved in allosteric activation by GTP region; sequence GEKGFG. Gly54 serves as a coordination point for UMP. Residues Gly55 and Arg59 each contribute to the ATP site. Residues Asp72 and 133–140 each bind UMP; that span reads TGNPFFST. ATP contacts are provided by Tyr166 and Asp169.

This sequence belongs to the UMP kinase family. Homohexamer.

Its subcellular location is the cytoplasm. It carries out the reaction UMP + ATP = UDP + ADP. It functions in the pathway pyrimidine metabolism; CTP biosynthesis via de novo pathway; UDP from UMP (UMPK route): step 1/1. With respect to regulation, allosterically activated by GTP. Inhibited by UTP. Functionally, catalyzes the reversible phosphorylation of UMP to UDP. This is Uridylate kinase from Caldicellulosiruptor saccharolyticus (strain ATCC 43494 / DSM 8903 / Tp8T 6331).